Here is a 468-residue protein sequence, read N- to C-terminus: Argininosuccinate lyase (468 aa).

This sequence belongs to the lyase 1 family. Argininosuccinate lyase subfamily.

It localises to the cytoplasm. It catalyses the reaction 2-(N(omega)-L-arginino)succinate = fumarate + L-arginine. It functions in the pathway amino-acid biosynthesis; L-arginine biosynthesis; L-arginine from L-ornithine and carbamoyl phosphate: step 3/3. The protein is Argininosuccinate lyase of Paraburkholderia phymatum (strain DSM 17167 / CIP 108236 / LMG 21445 / STM815) (Burkholderia phymatum).